Reading from the N-terminus, the 180-residue chain is Small ribosomal subunit protein uS4 (180 aa).

One can recognise an S4 RNA-binding domain in the interval 103–174 (RRLQTLVFKK…HPERMVIEEV (72 aa)).

This sequence belongs to the universal ribosomal protein uS4 family. As to quaternary structure, part of the 30S ribosomal subunit. Contacts protein S5. The interaction surface between S4 and S5 is involved in control of translational fidelity.

In terms of biological role, one of the primary rRNA binding proteins, it binds directly to 16S rRNA where it nucleates assembly of the body of the 30S subunit. With S5 and S12 plays an important role in translational accuracy. This chain is Small ribosomal subunit protein uS4, found in Thermococcus sibiricus (strain DSM 12597 / MM 739).